The chain runs to 569 residues: Probable santalene synthase (569 aa).

The (2E)-geranyl diphosphate site is built by arginine 284, aspartate 321, aspartate 325, arginine 460, and asparagine 463. 2 residues coordinate Mg(2+): aspartate 321 and aspartate 325. A DDXXD motif motif is present at residues 321–325; sequence DDAYD. Mg(2+) is bound by residues asparagine 463, threonine 467, and glutamate 471.

Belongs to the terpene synthase family. Tpsb subfamily. Mg(2+) serves as cofactor. Requires Mn(2+) as cofactor.

Its function is as follows. Catalyzes the formation of santalene. This chain is Probable santalene synthase (SSY), found in Santalum murrayanum (Bitter quandong).